The chain runs to 440 residues: Exodeoxyribonuclease 7 large subunit (440 aa).

Belongs to the XseA family. In terms of assembly, heterooligomer composed of large and small subunits.

It localises to the cytoplasm. It catalyses the reaction Exonucleolytic cleavage in either 5'- to 3'- or 3'- to 5'-direction to yield nucleoside 5'-phosphates.. Bidirectionally degrades single-stranded DNA into large acid-insoluble oligonucleotides, which are then degraded further into small acid-soluble oligonucleotides. The chain is Exodeoxyribonuclease 7 large subunit from Ralstonia nicotianae (strain ATCC BAA-1114 / GMI1000) (Ralstonia solanacearum).